The primary structure comprises 351 residues: MKFLDQAKVYVRSGNGGGGCVSFRREAYVEYGGPDGGDGGKGGDVWVEAVEGLNTLIDYRYKQHFKADTGMHGMGRNRTGSGGEDVVLQVPAGTQLLDEDKEEILADLTEIGQRVLLARGGDGGKGNSHFKTSTNQAPRKTIPGWPGEERWIWLRLKLIADVGLVGLPNAGKSTFLSVVSKANPKIAAYPFTTLYPNLGVVDLGPGSRFIVADIPGLIEGAHEGAGIGDRFLGHIERCASLIHLIDGTQDDVVAAYKTVRGELEAYGDGLPEKQEILALNKIDAMDEAMVAEKRAELEAASGKTVMTLSGVSGDGVKALCGSAWDIVLQNRRAEKAAAEAAEKGEEGWAPS.

The Obg domain maps to 1–159; that stretch reads MKFLDQAKVY…RWIWLRLKLI (159 aa). Positions 160 to 328 constitute an OBG-type G domain; that stretch reads ADVGLVGLPN…LCGSAWDIVL (169 aa). Residues 166–173, 191–195, 213–216, 280–283, and 309–311 contribute to the GTP site; these read GLPNAGKS, FTTLY, DIPG, NKID, and SGV. Residues serine 173 and threonine 193 each contribute to the Mg(2+) site.

Belongs to the TRAFAC class OBG-HflX-like GTPase superfamily. OBG GTPase family. Monomer. Requires Mg(2+) as cofactor.

The protein localises to the cytoplasm. Functionally, an essential GTPase which binds GTP, GDP and possibly (p)ppGpp with moderate affinity, with high nucleotide exchange rates and a fairly low GTP hydrolysis rate. Plays a role in control of the cell cycle, stress response, ribosome biogenesis and in those bacteria that undergo differentiation, in morphogenesis control. The polypeptide is GTPase Obg (Maricaulis maris (strain MCS10) (Caulobacter maris)).